Consider the following 351-residue polypeptide: Sulfate/thiosulfate import ATP-binding protein CysA (351 aa).

An ABC transporter domain is found at 3–237; sequence ITVRNLHKRF…PRSAFVYEFL (235 aa). 35-42 contributes to the ATP binding site; the sequence is GPSGCGKT.

Belongs to the ABC transporter superfamily. Sulfate/tungstate importer (TC 3.A.1.6) family. In terms of assembly, the complex is composed of two ATP-binding proteins (CysA), two transmembrane proteins (CysT and CysW) and a solute-binding protein (CysP).

Its subcellular location is the cell inner membrane. The enzyme catalyses sulfate(out) + ATP + H2O = sulfate(in) + ADP + phosphate + H(+). It catalyses the reaction thiosulfate(out) + ATP + H2O = thiosulfate(in) + ADP + phosphate + H(+). Functionally, part of the ABC transporter complex CysAWTP involved in sulfate/thiosulfate import. Responsible for energy coupling to the transport system. The sequence is that of Sulfate/thiosulfate import ATP-binding protein CysA from Burkholderia mallei (strain ATCC 23344).